A 428-amino-acid chain; its full sequence is 3-phosphoshikimate 1-carboxyvinyltransferase (428 aa).

3 residues coordinate 3-phosphoshikimate: K23, S24, and R28. K23 serves as a coordination point for phosphoenolpyruvate. G97 and R125 together coordinate phosphoenolpyruvate. The 3-phosphoshikimate site is built by S170, S171, Q172, S198, D314, N337, and K341. Q172 is a binding site for phosphoenolpyruvate. D314 serves as the catalytic Proton acceptor. The phosphoenolpyruvate site is built by R345, R387, and K412.

It belongs to the EPSP synthase family. Monomer.

The protein resides in the cytoplasm. The enzyme catalyses 3-phosphoshikimate + phosphoenolpyruvate = 5-O-(1-carboxyvinyl)-3-phosphoshikimate + phosphate. It functions in the pathway metabolic intermediate biosynthesis; chorismate biosynthesis; chorismate from D-erythrose 4-phosphate and phosphoenolpyruvate: step 6/7. Functionally, catalyzes the transfer of the enolpyruvyl moiety of phosphoenolpyruvate (PEP) to the 5-hydroxyl of shikimate-3-phosphate (S3P) to produce enolpyruvyl shikimate-3-phosphate and inorganic phosphate. The protein is 3-phosphoshikimate 1-carboxyvinyltransferase of Yersinia pseudotuberculosis serotype IB (strain PB1/+).